A 219-amino-acid chain; its full sequence is Holliday junction branch migration complex subunit RuvA (219 aa).

The domain I stretch occupies residues 1–71 (MISWIKGELV…EDSDMLFGFS (71 aa)). Positions 72 to 150 (TKDQRDFFIQ…NKEIEKENLN (79 aa)) are domain II. Residues 151–161 (INNFLEKNKDL) are flexible linker. Residues 161 to 219 (LDSIFKDIDLTLQSLNYSKKEIKNLFPKLINNIKNSSLEKESISFENLLKEAMNYLDHK) form a domain III region.

It belongs to the RuvA family. In terms of assembly, homotetramer. Forms an RuvA(8)-RuvB(12)-Holliday junction (HJ) complex. HJ DNA is sandwiched between 2 RuvA tetramers; dsDNA enters through RuvA and exits via RuvB. An RuvB hexamer assembles on each DNA strand where it exits the tetramer. Each RuvB hexamer is contacted by two RuvA subunits (via domain III) on 2 adjacent RuvB subunits; this complex drives branch migration. In the full resolvosome a probable DNA-RuvA(4)-RuvB(12)-RuvC(2) complex forms which resolves the HJ.

The protein localises to the cytoplasm. In terms of biological role, the RuvA-RuvB-RuvC complex processes Holliday junction (HJ) DNA during genetic recombination and DNA repair, while the RuvA-RuvB complex plays an important role in the rescue of blocked DNA replication forks via replication fork reversal (RFR). RuvA specifically binds to HJ cruciform DNA, conferring on it an open structure. The RuvB hexamer acts as an ATP-dependent pump, pulling dsDNA into and through the RuvAB complex. HJ branch migration allows RuvC to scan DNA until it finds its consensus sequence, where it cleaves and resolves the cruciform DNA. This chain is Holliday junction branch migration complex subunit RuvA, found in Prochlorococcus marinus subsp. pastoris (strain CCMP1986 / NIES-2087 / MED4).